Reading from the N-terminus, the 1401-residue chain is DNA-directed RNA polymerase subunit beta' (1401 aa).

Residues Cys-71, Cys-73, Cys-86, and Cys-89 each coordinate Zn(2+). The Mg(2+) site is built by Asp-462, Asp-464, and Asp-466. 4 residues coordinate Zn(2+): Cys-810, Cys-884, Cys-891, and Cys-894. The segment at Arg-1377 to Glu-1401 is disordered.

Belongs to the RNA polymerase beta' chain family. In terms of assembly, the RNAP catalytic core consists of 2 alpha, 1 beta, 1 beta' and 1 omega subunit. When a sigma factor is associated with the core the holoenzyme is formed, which can initiate transcription. It depends on Mg(2+) as a cofactor. Requires Zn(2+) as cofactor.

The enzyme catalyses RNA(n) + a ribonucleoside 5'-triphosphate = RNA(n+1) + diphosphate. DNA-dependent RNA polymerase catalyzes the transcription of DNA into RNA using the four ribonucleoside triphosphates as substrates. This Rhizobium meliloti (strain 1021) (Ensifer meliloti) protein is DNA-directed RNA polymerase subunit beta'.